A 196-amino-acid chain; its full sequence is Nucleoid occlusion factor SlmA (196 aa).

The HTH tetR-type domain occupies 7 to 68 (TNRREEILQA…GLIEFIEEAL (62 aa)). A DNA-binding region (H-T-H motif) is located at residues 31-50 (TTAKLAKQVGVSEAALYRHF). Positions 110-142 (HALMFENERLRDRINQLFERIETQLRQILRERK) form a coiled coil.

Belongs to the nucleoid occlusion factor SlmA family. As to quaternary structure, homodimer. Interacts with FtsZ.

The protein resides in the cytoplasm. It localises to the nucleoid. Required for nucleoid occlusion (NO) phenomenon, which prevents Z-ring formation and cell division over the nucleoid. Acts as a DNA-associated cell division inhibitor that binds simultaneously chromosomal DNA and FtsZ, and disrupts the assembly of FtsZ polymers. SlmA-DNA-binding sequences (SBS) are dispersed on non-Ter regions of the chromosome, preventing FtsZ polymerization at these regions. This chain is Nucleoid occlusion factor SlmA, found in Vibrio campbellii (strain ATCC BAA-1116).